Here is an 81-residue protein sequence, read N- to C-terminus: U6-theraphotoxin-Hs1a (81 aa).

The first 21 residues, 1–21 (MKASMFLALAGLVLLFVVCYA), serve as a signal peptide directing secretion. Positions 22–48 (SESEEKEFPRELLSTIFAVDDFKGEER) are excised as a propeptide. 2 cysteine pairs are disulfide-bonded: cysteine 50/cysteine 65 and cysteine 57/cysteine 70.

It belongs to the neurotoxin 10 (Hwtx-1) family. 51 (Hntx-8) subfamily. As to expression, expressed by the venom gland.

It is found in the secreted. Binds to the nicotinic acetylcholine receptor. Blocks neuromuscular transmission. This Cyriopagopus schmidti (Chinese bird spider) protein is U6-theraphotoxin-Hs1a.